The primary structure comprises 57 residues: Potassium channel toxin gamma-KTx 2.1 (57 aa).

The signal sequence occupies residues 1–21; the sequence is MKISFVLLLTLFICSIGWSEA. Intrachain disulfides connect cysteine 28-cysteine 49, cysteine 34-cysteine 54, and cysteine 38-cysteine 56.

This sequence belongs to the short scorpion toxin superfamily. Potassium channel inhibitor family. Gamma-KTx 2 subfamily. Expressed by the venom gland.

Its subcellular location is the secreted. In terms of biological role, blocks human and/or rat Kv11.1/KCNH2/ERG1, Kv11.2/KCNH6/ERG2 and Kv11.3/KCNH7/ERG3 by binding to channel outer vestibule (S5P domain) with a 1:1 stoichiometry. Inhibition data are the following: hERG1 (reversible, Kd=7.7 nM, IC(50)=3.3 nM, IC(50)=11.9 nM), rERG1 (reversible, Kd=19 nM), hERG2 (reversible, Kd=77 nM), rERG2 (irreversible, Kd=4.2 nM), hERG3 (reversible, Kd=11.5 nM) and rERG3 (reversible, Kd=747 nM) potassium channels. Also has a minimal effect on rat ELK1/KCNH4 potassium channels (9% inhibition at 100 nM). Both this toxin and CnErgTx1 (AC Q86QT3) share mechanism of action and have overlapping binding sites on ERG1. The potency of these two toxins is not affected by elevating potassium ion concentration from 2 to 98 mM. In addition, at high toxin concentrations, block of ERG1 macroscopic currents by these two toxins is incomplete (88%). The blockade by this toxin is preferentially closed channel state-dependent, with a component of open, but not inactive state-dependent blockade. This toxin produces a concentration-dependent prolongation of QTc in the isolated rabbit heart (16.3% at 100 nM). The polypeptide is Potassium channel toxin gamma-KTx 2.1 (Mesobuthus eupeus (Lesser Asian scorpion)).